A 342-amino-acid polypeptide reads, in one-letter code: Ribosomal RNA small subunit methyltransferase C (342 aa).

This sequence belongs to the methyltransferase superfamily. RsmC family. In terms of assembly, monomer.

It localises to the cytoplasm. The enzyme catalyses guanosine(1207) in 16S rRNA + S-adenosyl-L-methionine = N(2)-methylguanosine(1207) in 16S rRNA + S-adenosyl-L-homocysteine + H(+). Functionally, specifically methylates the guanine in position 1207 of 16S rRNA in the 30S particle. The sequence is that of Ribosomal RNA small subunit methyltransferase C from Salmonella arizonae (strain ATCC BAA-731 / CDC346-86 / RSK2980).